A 248-amino-acid chain; its full sequence is Transmembrane protein 223 (248 aa).

3 consecutive transmembrane segments (helical) span residues 46-68 (IFRP…AAVA), 84-104 (LLAI…HFAF), and 140-160 (YGFT…ALLF).

It belongs to the TMEM223 family.

It localises to the mitochondrion inner membrane. Mitochondrial ribosome-associated protein involved in the first steps of cytochrome c oxidase complex (complex IV) biogenesis. Stimulates the translation of MT-CO1 mRNA and is a constituent of early MT-CO1 assembly intermediates. The sequence is that of Transmembrane protein 223 from Danio rerio (Zebrafish).